The following is an 819-amino-acid chain: Regulator of G-protein signaling rgs-7 (819 aa).

A compositionally biased stretch (acidic residues) spans 1 to 11; the sequence is MSDEDADEYDD. 3 disordered regions span residues 1–51, 112–135, and 149–259; these read MSDE…EMLW, GDDS…GYGS, and SSTY…HNNE. A compositionally biased stretch (polar residues) spans 32–44; it reads YQDTTESTGPSEA. A compositionally biased stretch (basic and acidic residues) spans 112–124; that stretch reads GDDSSFRSRDRFV. Residues 149–166 are compositionally biased toward low complexity; sequence SSTYSSSSEAHRLSSLRA. Residues 173–185 show a composition bias toward polar residues; sequence QLTSTTTSFQPLS. The segment covering 213–223 has biased composition (basic residues); that stretch reads RMYRKNPKYRR. Positions 234–259 are enriched in basic and acidic residues; it reads SRLEESTSQESERAVTPESWMEHNNE. A C2 domain is found at 290–429; that stretch reads KHKDIRGIIF…KASQVVGDPF (140 aa). 2 disordered regions span residues 515 to 594 and 617 to 640; these read YRST…DDNG and FTFS…EEDK. Polar residues-rich tracts occupy residues 517-533, 559-568, and 617-632; these read STGS…NLLD, PSITTTTSEN, and FTFS…NLRQ. The RGS domain maps to 682–800; that stretch reads SFESLLNNKF…LRDRLFLDLL (119 aa).

As to quaternary structure, interacts with egl-30.

Inhibits signal transduction by increasing the GTPase activity of G protein alpha subunit egl-30 (G-alpha(q)), thereby driving it into its inactive GDP-bound form. May organize egl-30 into a stable multiprotein signaling complex, and thereby persistently inhibit egl-30 when triggered by calcium or phospholipids. The protein is Regulator of G-protein signaling rgs-7 (rgs-7) of Caenorhabditis elegans.